The sequence spans 88 residues: Apolipoprotein C-I (88 aa).

An N-terminal signal peptide occupies residues 1–26 (MRLFLSLPVLVVVLAMVLEGPAPAQA).

This sequence belongs to the apolipoprotein C1 family.

It localises to the secreted. Its function is as follows. Inhibitor of lipoprotein binding to the low density lipoprotein (LDL) receptor, LDL receptor-related protein, and very low density lipoprotein (VLDL) receptor. Associates with high density lipoproteins (HDL) and the triacylglycerol-rich lipoproteins in the plasma and makes up about 10% of the protein of the VLDL and 2% of that of HDL. Appears to interfere directly with fatty acid uptake and is also the major plasma inhibitor of cholesteryl ester transfer protein (CETP). Binds free fatty acids and reduces their intracellular esterification. Modulates the interaction of APOE with beta-migrating VLDL and inhibits binding of beta-VLDL to the LDL receptor-related protein. The sequence is that of Apolipoprotein C-I (APOC1) from Arctocephalus gazella (Antarctic fur seal).